Here is a 199-residue protein sequence, read N- to C-terminus: dITP/XTP pyrophosphatase (199 aa).

Residue 7–12 (TGNAGK) participates in substrate binding. Mg(2+)-binding residues include E37 and D66. D66 functions as the Proton acceptor in the catalytic mechanism. Substrate is bound by residues S67, 146–149 (FGYD), K169, and 174–175 (HR).

This sequence belongs to the HAM1 NTPase family. In terms of assembly, homodimer. Requires Mg(2+) as cofactor.

It catalyses the reaction XTP + H2O = XMP + diphosphate + H(+). The catalysed reaction is dITP + H2O = dIMP + diphosphate + H(+). The enzyme catalyses ITP + H2O = IMP + diphosphate + H(+). In terms of biological role, pyrophosphatase that catalyzes the hydrolysis of nucleoside triphosphates to their monophosphate derivatives, with a high preference for the non-canonical purine nucleotides XTP (xanthosine triphosphate), dITP (deoxyinosine triphosphate) and ITP. Seems to function as a house-cleaning enzyme that removes non-canonical purine nucleotides from the nucleotide pool, thus preventing their incorporation into DNA/RNA and avoiding chromosomal lesions. This chain is dITP/XTP pyrophosphatase, found in Deinococcus geothermalis (strain DSM 11300 / CIP 105573 / AG-3a).